Consider the following 131-residue polypeptide: Peptide methionine sulfoxide reductase MsrB (131 aa).

Positions 8-130 (LDEWRSMLDP…NSVCIDLRPR (123 aa)) constitute a MsrB domain. Zn(2+)-binding residues include Cys47, Cys50, Cys96, and Cys99. Cys119 functions as the Nucleophile in the catalytic mechanism.

The protein belongs to the MsrB Met sulfoxide reductase family. Zn(2+) serves as cofactor.

The catalysed reaction is L-methionyl-[protein] + [thioredoxin]-disulfide + H2O = L-methionyl-(R)-S-oxide-[protein] + [thioredoxin]-dithiol. The sequence is that of Peptide methionine sulfoxide reductase MsrB from Pseudomonas putida (strain GB-1).